An 886-amino-acid polypeptide reads, in one-letter code: Receptor-like kinase TMK2 (886 aa).

The signal sequence occupies residues 1-20 (MIAKNFLLLLCFIALVNVES). The Extracellular portion of the chain corresponds to 21–460 (SPDEAVMIAL…GKKASSNAGK (440 aa)). A glycan (N-linked (GlcNAc...) asparagine) is linked at N41. A disulfide bridge links C48 with C56. LRR repeat units follow at residues 59–83 (SNRV…LGKL), 84–106 (TSLT…LAGL), 107–129 (KSLV…FFSG), 131–155 (SSLQ…LENA), 157–179 (SLVD…LFEG), 182–206 (FSSL…FSDS), 208–232 (VQVL…LQKM), 233–254 (TSLT…DFSG), 255–279 (LVSL…LFEL), and 281–302 (SLSD…FTAP). N154, N167, and N202 each carry an N-linked (GlcNAc...) asparagine glycan. The N-linked (GlcNAc...) asparagine glycan is linked to N237. N-linked (GlcNAc...) asparagine glycosylation is present at N298. Disulfide bonds link C315–C323 and C353–C361. LRR repeat units lie at residues 363–386 (GTDI…RFAD), 387–410 (FASL…ELAK), and 411–438 (LSNL…IVNT). N377, N394, N401, N432, and N437 each carry an N-linked (GlcNAc...) asparagine glycan. The helical transmembrane segment at 461–481 (IVGSVIGILLALLLIGVAIFF) threads the bilayer. The Cytoplasmic portion of the chain corresponds to 482-886 (LVKKKMQYHK…ESTFKSGQGR (405 aa)). The Protein kinase domain occupies 547–827 (FDEKNILGRG…HVVNVLVSLV (281 aa)). ATP is bound by residues 553–561 (LGRGGFGIV) and K575. The active-site Proton acceptor is D676.

It belongs to the protein kinase superfamily. Ser/Thr protein kinase family. In terms of tissue distribution, expressed in siliques and flowers.

The protein resides in the membrane. It carries out the reaction L-seryl-[protein] + ATP = O-phospho-L-seryl-[protein] + ADP + H(+). The enzyme catalyses L-threonyl-[protein] + ATP = O-phospho-L-threonyl-[protein] + ADP + H(+). Involved in auxin signal transduction and cell expansion and proliferation regulation. The chain is Receptor-like kinase TMK2 from Arabidopsis thaliana (Mouse-ear cress).